The chain runs to 149 residues: Nucleoside diphosphate kinase 1 (149 aa).

Met-1 bears the N-acetylmethionine mark. ATP is bound by residues Lys-9, Phe-57, Arg-85, Thr-91, Arg-102, and Asn-112. His-115 acts as the Pros-phosphohistidine intermediate in catalysis.

It belongs to the NDK family. As to quaternary structure, interacts with CAT1, CAT2 and CAT3. It depends on Mg(2+) as a cofactor.

The protein resides in the peroxisome. Its subcellular location is the nucleus. It localises to the cytoplasm. The enzyme catalyses a 2'-deoxyribonucleoside 5'-diphosphate + ATP = a 2'-deoxyribonucleoside 5'-triphosphate + ADP. It catalyses the reaction a ribonucleoside 5'-diphosphate + ATP = a ribonucleoside 5'-triphosphate + ADP. Major role in the synthesis of nucleoside triphosphates other than ATP. The ATP gamma phosphate is transferred to the NDP beta phosphate via a ping-pong mechanism, using a phosphorylated active-site intermediate. Plays a role in response to reactive oxygen species (ROS) stress. This Arabidopsis thaliana (Mouse-ear cress) protein is Nucleoside diphosphate kinase 1 (NDK1).